A 148-amino-acid chain; its full sequence is Ribonuclease pancreatic (148 aa).

The signal sequence occupies residues 1-25 (MGLEKSLILFPLLVLVVGWVQPSLG). Residues Lys32, Arg35, 65–69 (KPVNT), Lys90, and Arg109 each bind substrate. Disulfide bonds link Cys50/Cys108, Cys64/Cys119, Cys82/Cys134, and Cys89/Cys96. The Proton donor role is filled by His143.

The protein belongs to the pancreatic ribonuclease family. As to quaternary structure, monomer. Interacts with and forms tight 1:1 complexes with RNH1. Dimerization of two such complexes may occur. Interaction with RNH1 inhibits this protein. As to expression, pancreas.

Its subcellular location is the secreted. It catalyses the reaction an [RNA] containing cytidine + H2O = an [RNA]-3'-cytidine-3'-phosphate + a 5'-hydroxy-ribonucleotide-3'-[RNA].. The catalysed reaction is an [RNA] containing uridine + H2O = an [RNA]-3'-uridine-3'-phosphate + a 5'-hydroxy-ribonucleotide-3'-[RNA].. Functionally, endonuclease that catalyzes the cleavage of RNA on the 3' side of pyrimidine nucleotides. Acts on single-stranded and double-stranded RNA. The chain is Ribonuclease pancreatic (RNASE1) from Peromyscus leucopus (White-footed mouse).